We begin with the raw amino-acid sequence, 174 residues long: NADH-ubiquinone oxidoreductase chain 6 (174 aa).

The next 5 helical transmembrane spans lie at 1–21 (MTYT…GFSS), 24–44 (SPIY…AVIL), 47–67 (GGGY…MVVF), 86–106 (VEVL…VLWA), and 151–171 (WLVV…IEIA).

This sequence belongs to the complex I subunit 6 family. As to quaternary structure, core subunit of respiratory chain NADH dehydrogenase (Complex I) which is composed of 45 different subunits.

The protein resides in the mitochondrion inner membrane. It catalyses the reaction a ubiquinone + NADH + 5 H(+)(in) = a ubiquinol + NAD(+) + 4 H(+)(out). Its function is as follows. Core subunit of the mitochondrial membrane respiratory chain NADH dehydrogenase (Complex I) which catalyzes electron transfer from NADH through the respiratory chain, using ubiquinone as an electron acceptor. Essential for the catalytic activity and assembly of complex I. In Hylobates lar (Lar gibbon), this protein is NADH-ubiquinone oxidoreductase chain 6 (MT-ND6).